A 212-amino-acid chain; its full sequence is Ribonuclease HII (212 aa).

The 205-residue stretch at 1-205 (MTICGVDEAG…VQDILDRASQ (205 aa)) folds into the RNase H type-2 domain. 3 residues coordinate a divalent metal cation: D7, E8, and D100.

It belongs to the RNase HII family. Mn(2+) is required as a cofactor. The cofactor is Mg(2+).

It is found in the cytoplasm. The catalysed reaction is Endonucleolytic cleavage to 5'-phosphomonoester.. Its function is as follows. Endonuclease that specifically degrades the RNA of RNA-DNA hybrids. The sequence is that of Ribonuclease HII from Methanocorpusculum labreanum (strain ATCC 43576 / DSM 4855 / Z).